A 702-amino-acid polypeptide reads, in one-letter code: MARKTPIERYRNIGISAHIDAGKTTTTERILFYTGVNHKIGEVHDGAATMDWMEQEQERGITITSAATTCFWKGMDLSLPEHRINIIDTPGHVDFTIEVERSMRVLDGACMVYCAVGGVQPQSETVWRQANKYKVPRLAFVNKMDRTGANFFKTTSQMEGRLGQPVPVVFPIGAEENFRGVIDLLKMKAIIWDEASQGMKFEYQDPAELLSDAEKWRSAMVEAAAEANEELMNRYLESGELSEEEIKAWLEKRVLNAEQILAYALRTAFKNKGVQAMLAVIDFLPSPVDIPPCNGTDDNEHDTVRRASDDEKFSALAFKLMTDPYVGQLTFIRVYSGILQSGDTVYNPIKGKKERIGRFVQMHANQRDEIKEVRAGDIAPAIGLREITTGETLCDPESIITLEKMVFPEPVISQAVEPKTKADQEKMGIALQRVAQEDPSFRVKTDEESGQTIISGMGELHLEILVDRMKREFGVEANVGKPQVAYRETIRKTVDDVDGKQAKHSGGRGHYGHVVIAMYRLDRESKPKGYDCMNDIKGGVSPGEYIPPVDNGIHEQLNSGVLAGYPVVDVKVTLHFGSYHEVDSSEQAFKMAASIGFKEGCRKANPVILEPMMAVEVETPEDYAGNVMGDLSSRRGMVQGMDEIVTGGKVIRAEVPLSEMFGYSTTLRSMSQGRATYSMEFKHYAEAPRNVAERSSARVQGK.

One can recognise a tr-type G domain in the interval glutamate 8–serine 196. GTP is bound by residues alanine 17–threonine 24, aspartate 88–histidine 92, and asparagine 142–aspartate 145.

The protein belongs to the TRAFAC class translation factor GTPase superfamily. Classic translation factor GTPase family. EF-G/EF-2 subfamily.

It is found in the cytoplasm. Functionally, catalyzes the GTP-dependent ribosomal translocation step during translation elongation. During this step, the ribosome changes from the pre-translocational (PRE) to the post-translocational (POST) state as the newly formed A-site-bound peptidyl-tRNA and P-site-bound deacylated tRNA move to the P and E sites, respectively. Catalyzes the coordinated movement of the two tRNA molecules, the mRNA and conformational changes in the ribosome. The chain is Elongation factor G (fusA) from Thiomonas delicata (Thiomonas cuprina).